Consider the following 319-residue polypeptide: Beta-ketoacyl-[acyl-carrier-protein] synthase III (319 aa).

Catalysis depends on residues Cys-113 and His-246. Residues 247 to 251 (QANLR) are ACP-binding. Asn-276 is an active-site residue.

This sequence belongs to the thiolase-like superfamily. FabH family. In terms of assembly, homodimer.

It is found in the cytoplasm. It carries out the reaction malonyl-[ACP] + acetyl-CoA + H(+) = 3-oxobutanoyl-[ACP] + CO2 + CoA. Its pathway is lipid metabolism; fatty acid biosynthesis. Its function is as follows. Catalyzes the condensation reaction of fatty acid synthesis by the addition to an acyl acceptor of two carbons from malonyl-ACP. Catalyzes the first condensation reaction which initiates fatty acid synthesis and may therefore play a role in governing the total rate of fatty acid production. Possesses both acetoacetyl-ACP synthase and acetyl transacylase activities. Its substrate specificity determines the biosynthesis of branched-chain and/or straight-chain of fatty acids. The polypeptide is Beta-ketoacyl-[acyl-carrier-protein] synthase III (Chromobacterium violaceum (strain ATCC 12472 / DSM 30191 / JCM 1249 / CCUG 213 / NBRC 12614 / NCIMB 9131 / NCTC 9757 / MK)).